We begin with the raw amino-acid sequence, 87 residues long: Translation initiation factor IF-1 2 (87 aa).

Residues 1–72 (MAKEELLELD…TKGRINFRHK (72 aa)) enclose the S1-like domain. The interval 68–87 (NFRHKDANSPRPPRSGQPRR) is disordered. Residues 77 to 87 (PRPPRSGQPRR) are compositionally biased toward pro residues.

The protein belongs to the IF-1 family. As to quaternary structure, component of the 30S ribosomal translation pre-initiation complex which assembles on the 30S ribosome in the order IF-2 and IF-3, IF-1 and N-formylmethionyl-tRNA(fMet); mRNA recruitment can occur at any time during PIC assembly.

Its subcellular location is the cytoplasm. In terms of biological role, one of the essential components for the initiation of protein synthesis. Stabilizes the binding of IF-2 and IF-3 on the 30S subunit to which N-formylmethionyl-tRNA(fMet) subsequently binds. Helps modulate mRNA selection, yielding the 30S pre-initiation complex (PIC). Upon addition of the 50S ribosomal subunit IF-1, IF-2 and IF-3 are released leaving the mature 70S translation initiation complex. The sequence is that of Translation initiation factor IF-1 2 from Burkholderia cenocepacia (strain HI2424).